The sequence spans 175 residues: B9 domain-containing protein 2 (175 aa).

The 117-residue stretch at 2-118 (AEVHVIGQIM…DCPTWRPLGS (117 aa)) folds into the C2 B9-type domain.

The protein belongs to the B9D family. Part of the tectonic-like complex (also named B9 complex). Interacts with TUBG1.

The protein resides in the cytoplasm. Its subcellular location is the cytoskeleton. It is found in the cilium basal body. The protein localises to the cilium axoneme. It localises to the nucleus. Functionally, component of the tectonic-like complex, a complex localized at the transition zone of primary cilia and acting as a barrier that prevents diffusion of transmembrane proteins between the cilia and plasma membranes. The chain is B9 domain-containing protein 2 (B9D2) from Bos taurus (Bovine).